Consider the following 336-residue polypeptide: tRNA N6-adenosine threonylcarbamoyltransferase (336 aa).

2 residues coordinate Fe cation: H111 and H115. Residues 133–137 (LISGG), D166, G179, and N276 each bind substrate. A Fe cation-binding site is contributed by D301.

The protein belongs to the KAE1 / TsaD family. It depends on Fe(2+) as a cofactor.

It is found in the cytoplasm. It carries out the reaction L-threonylcarbamoyladenylate + adenosine(37) in tRNA = N(6)-L-threonylcarbamoyladenosine(37) in tRNA + AMP + H(+). Functionally, required for the formation of a threonylcarbamoyl group on adenosine at position 37 (t(6)A37) in tRNAs that read codons beginning with adenine. Is involved in the transfer of the threonylcarbamoyl moiety of threonylcarbamoyl-AMP (TC-AMP) to the N6 group of A37, together with TsaE and TsaB. TsaD likely plays a direct catalytic role in this reaction. In Wolbachia pipientis subsp. Culex pipiens (strain wPip), this protein is tRNA N6-adenosine threonylcarbamoyltransferase.